The sequence spans 276 residues: ADP-dependent (S)-NAD(P)H-hydrate dehydratase (276 aa).

In terms of domain architecture, YjeF C-terminal spans 7 to 275 (TEEHVRATLP…DILPRVWKRF (269 aa)). Residues alanine 42, glycine 104, and histidine 149 each contribute to the (6S)-NADPHX site. AMP is bound by residues 186-190 (KGNQT) and glycine 215. Position 216 (aspartate 216) interacts with (6S)-NADPHX.

This sequence belongs to the NnrD/CARKD family. Homotetramer. Mg(2+) serves as cofactor.

The enzyme catalyses (6S)-NADHX + ADP = AMP + phosphate + NADH + H(+). The catalysed reaction is (6S)-NADPHX + ADP = AMP + phosphate + NADPH + H(+). Catalyzes the dehydration of the S-form of NAD(P)HX at the expense of ADP, which is converted to AMP. Together with NAD(P)HX epimerase, which catalyzes the epimerization of the S- and R-forms, the enzyme allows the repair of both epimers of NAD(P)HX, a damaged form of NAD(P)H that is a result of enzymatic or heat-dependent hydration. This is ADP-dependent (S)-NAD(P)H-hydrate dehydratase from Bacillus subtilis (strain 168).